The sequence spans 67 residues: Bombesin (67 aa).

Residues 1–30 (MLLLSAVKTLLLAWLGIVLVFMSIIKSAML) form the signal peptide. Positions 31 to 49 (DFLQEAGKLEGIETYKKEA) are excised as a propeptide. The residue at position 50 (Gln-50) is a Pyrrolidone carboxylic acid. Methionine amide is present on Met-64.

As to expression, expressed by the skin glands.

Its subcellular location is the secreted. Its function is as follows. Stimulates smooth muscle contraction in isolated rat stomach strip. The polypeptide is Bombesin (Rana shuchinae (Sichuan frog)).